The sequence spans 191 residues: Sec-independent protein translocase protein TatB (191 aa).

Residues methionine 1–glycine 21 traverse the membrane as a helical segment. The segment covering glutamate 119–alanine 138 has biased composition (polar residues). 2 disordered regions span residues glutamate 119 to threonine 139 and aspartate 168 to alanine 191. Residues proline 181–alanine 191 are compositionally biased toward basic and acidic residues.

This sequence belongs to the TatB family. As to quaternary structure, the Tat system comprises two distinct complexes: a TatABC complex, containing multiple copies of TatA, TatB and TatC subunits, and a separate TatA complex, containing only TatA subunits. Substrates initially bind to the TatABC complex, which probably triggers association of the separate TatA complex to form the active translocon.

The protein resides in the cell inner membrane. In terms of biological role, part of the twin-arginine translocation (Tat) system that transports large folded proteins containing a characteristic twin-arginine motif in their signal peptide across membranes. Together with TatC, TatB is part of a receptor directly interacting with Tat signal peptides. TatB may form an oligomeric binding site that transiently accommodates folded Tat precursor proteins before their translocation. The protein is Sec-independent protein translocase protein TatB of Pasteurella multocida (strain Pm70).